The following is a 226-amino-acid chain: UPF0173 metal-dependent hydrolase Dgeo_0136 (226 aa).

It belongs to the UPF0173 family.

The sequence is that of UPF0173 metal-dependent hydrolase Dgeo_0136 from Deinococcus geothermalis (strain DSM 11300 / CIP 105573 / AG-3a).